The sequence spans 102 residues: Small ribosomal subunit protein uS10 (102 aa).

The protein belongs to the universal ribosomal protein uS10 family. As to quaternary structure, part of the 30S ribosomal subunit.

Functionally, involved in the binding of tRNA to the ribosomes. This is Small ribosomal subunit protein uS10 from Kosmotoga olearia (strain ATCC BAA-1733 / DSM 21960 / TBF 19.5.1).